A 234-amino-acid polypeptide reads, in one-letter code: Demethylmenaquinone methyltransferase (234 aa).

Residues Thr58, Asp79, and 106–107 (NA) contribute to the S-adenosyl-L-methionine site.

This sequence belongs to the class I-like SAM-binding methyltransferase superfamily. MenG/UbiE family.

The catalysed reaction is a 2-demethylmenaquinol + S-adenosyl-L-methionine = a menaquinol + S-adenosyl-L-homocysteine + H(+). Its pathway is quinol/quinone metabolism; menaquinone biosynthesis; menaquinol from 1,4-dihydroxy-2-naphthoate: step 2/2. Functionally, methyltransferase required for the conversion of demethylmenaquinol (DMKH2) to menaquinol (MKH2). In Bacillus pumilus (strain SAFR-032), this protein is Demethylmenaquinone methyltransferase.